The chain runs to 483 residues: Zinc metalloproteinase/disintegrin (483 aa).

Residues 1–20 (MIQVLLVTICLAVFPYQGSS) form the signal peptide. A propeptide spanning residues 21–190 (IILESGNVND…KASQLYLTPE (170 aa)) is cleaved from the precursor. Positions 197–395 (RYIELAIVVD…RNPQCILNAP (199 aa)) constitute a Peptidase M12B domain. Residue E200 participates in Ca(2+) binding. An N-linked (GlcNAc...) asparagine glycan is attached at N263. D284 is a Ca(2+) binding site. N-linked (GlcNAc...) asparagine glycosylation is present at N293. Intrachain disulfides connect C308–C390, C352–C374, and C354–C357. H333 lines the Zn(2+) pocket. E334 is an active-site residue. 2 residues coordinate Zn(2+): H337 and H343. Ca(2+) contacts are provided by C390 and N393. Positions 396–413 (LRTDTVSTPVSGNEFLEA) are excised as a propeptide. One can recognise a Disintegrin domain in the interval 403–483 (TPVSGNEFLE…SNDCPRWNDL (81 aa)). Disulfide bonds link C417–C432, C419–C427, C426–C449, C440–C446, C445–C470, and C458–C477. The Cell attachment site signature appears at 462 to 464 (RGD).

The protein belongs to the venom metalloproteinase (M12B) family. P-II subfamily. P-IIa sub-subfamily. Monomeric (disintegrin). Zn(2+) serves as cofactor. As to expression, expressed by the venom gland.

It localises to the secreted. In terms of biological role, impairs hemostasis in the envenomed animal. Its function is as follows. Inhibits platelet aggregation induced by ADP, thrombin, platelet-activating factor and collagen. Acts by inhibiting fibrinogen interaction with platelet receptors GPIIb/GPIIIa (ITGA2B/ITGB3). The sequence is that of Zinc metalloproteinase/disintegrin from Protobothrops flavoviridis (Habu).